The chain runs to 375 residues: tRNA-specific 2-thiouridylase MnmA (375 aa).

ATP is bound by residues 12-19 (GMSGGVDS) and methionine 38. The interval 98–100 (NPD) is interaction with target base in tRNA. Catalysis depends on cysteine 103, which acts as the Nucleophile. The cysteines at positions 103 and 200 are disulfide-linked. Glycine 127 provides a ligand contact to ATP. The segment at 150–152 (KDQ) is interaction with tRNA. Cysteine 200 acts as the Cysteine persulfide intermediate in catalysis. The segment at 312–313 (RY) is interaction with tRNA.

The protein belongs to the MnmA/TRMU family.

Its subcellular location is the cytoplasm. It carries out the reaction S-sulfanyl-L-cysteinyl-[protein] + uridine(34) in tRNA + AH2 + ATP = 2-thiouridine(34) in tRNA + L-cysteinyl-[protein] + A + AMP + diphosphate + H(+). In terms of biological role, catalyzes the 2-thiolation of uridine at the wobble position (U34) of tRNA, leading to the formation of s(2)U34. The protein is tRNA-specific 2-thiouridylase MnmA of Lactobacillus helveticus (strain DPC 4571).